The primary structure comprises 265 residues: Beta-lactamase OXA-48 (265 aa).

The signal sequence occupies residues 1 to 22 (MRVLALSAVFLVASIIGMPAVA). The active-site Acyl-ester intermediate is serine 70. 4 residues coordinate a beta-lactam: serine 70, lysine 73, serine 118, and arginine 250. Residue lysine 73 is modified to N6-carboxylysine.

The protein belongs to the class-D beta-lactamase family. In terms of assembly, monomer. Dimer. Post-translationally, carboxylated on the epsilon-amino group of a lysine, with the resulting carbamate functional group serving as a general base. Probably N-carboxylated at Lys-73 at neutral pH in vivo and undergoes complete N-decarboxylation, at pH 4.1, in vitro.

The enzyme catalyses a beta-lactam + H2O = a substituted beta-amino acid. With respect to regulation, inhibited by avibactam, related diazabicyclooctane (DBO) derivatives and by bicyclic boronic acids, via a covalent binding to Ser-70. Inhibited by chloride, bromide and iodide ions. Not inhibited by the beta-lactamase-blocking agents, clavulanic acid or tazobactam. Class D beta-lactamase which confers resistance to the beta-lactam antibiotics, including amoxicillin, and moderate resistance to cephalosporins and carbapenems such as cephalothin and imipenem; in the DH10B strain of E.coli. Acts via hydrolysis of the beta-lactam ring. Has oxacillin-, cephalothin- and imipenem-hydrolyzing activities. The protein is Beta-lactamase OXA-48 of Klebsiella pneumoniae.